The chain runs to 168 residues: Putative flavin-containing monooxygenase FMO GS-OX-like 11 (168 aa).

FAD is bound at residue 17–22; that stretch reads GAGAAG.

The protein belongs to the FMO family. The cofactor is FAD.

Functionally, catalyzes the conversion of methylthioalkyl glucosinolates of any chain length into methylsulfinylalkyl glucosinolates. The sequence is that of Putative flavin-containing monooxygenase FMO GS-OX-like 11 from Arabidopsis thaliana (Mouse-ear cress).